The following is an 88-amino-acid chain: Small ribosomal subunit protein bS20 (88 aa).

Basic residues predominate over residues 1–22 (MANIKSSKKRSIQSEKKRKYNS). The segment at 1-26 (MANIKSSKKRSIQSEKKRKYNSSKKS) is disordered.

It belongs to the bacterial ribosomal protein bS20 family.

Its function is as follows. Binds directly to 16S ribosomal RNA. The polypeptide is Small ribosomal subunit protein bS20 (Wigglesworthia glossinidia brevipalpis).